Here is a 718-residue protein sequence, read N- to C-terminus: ADP-ribosylation factor-binding protein GGA3 (718 aa).

The region spanning 16 to 146 (ATNPSNRQED…MLKRQGIVQS (131 aa)) is the VHS domain. Ser159 and Ser275 each carry phosphoserine. The GAT domain occupies 171–298 (DEEKSKLLAR…VINSYKTIIE (128 aa)). Positions 299 to 588 (GQIVNGEVTT…VHVPLESIKP (290 aa)) are unstructured hinge. Composition is skewed to low complexity over residues 334-350 (APSN…SGIP) and 360-369 (GPPRSRSSSQ). The tract at residues 334–381 (APSNSSPALAPPTSGIPILPPPPQTSGPPRSRSSSQAEAPPGSDSTNN) is disordered. The short motif at 387–391 (DEELL) is the Autoinhibitory element. Disordered regions lie at residues 395 to 455 (LTDP…MSQA) and 477 to 506 (SFMF…STSH). The region spanning 589-710 (SSALPVTAYD…TELGEVDQFP (122 aa)) is the GAE domain.

The protein belongs to the GGA protein family. Monomer. Interacts with GGA1 and GGA2. Binds to clathrin and activated ARFs, such as ARF1, ARF5 and ARF6. Binds RABEP1 and RABGEF1. Interacts with the membrane proteins M6PR/CD-MPR and IGF2R/CI-MPR and the accessory proteins SYNRG, EPN4, NECAP1, NECAP2 and AFTPH/aftiphilin. Interacts with TSG101 and UBC. Interacts with ADRA2B. Interacts with NTRK1; the interaction is independent of NTRK1 activation and ubiquitination. Interacts (via VHS domain) with BACE1 (via DXXLL motif). In terms of processing, phosphorylated by CK2 and dephosphorylated by PP2A. Phosphorylation of GGA3 allows the internal DXXLL motif to bind the VHS domain and to inhibit the recognition of cargo signals. Ubiquitinated. Post-translationally, proteolytically cleaved during apoptosis by CASP3.

Its subcellular location is the golgi apparatus. It is found in the trans-Golgi network membrane. It localises to the endosome membrane. The protein resides in the early endosome membrane. The protein localises to the recycling endosome membrane. Its function is as follows. Plays a role in protein sorting and trafficking between the trans-Golgi network (TGN) and endosomes. Mediates the ARF-dependent recruitment of clathrin to the TGN and binds ubiquitinated proteins and membrane cargo molecules with a cytosolic acidic cluster-dileucine (DXXLL) motif. Functionally, plays a role in protein sorting and trafficking between the trans-Golgi network (TGN) and endosomes. Mediates the ARF-dependent recruitment of clathrin to the TGN and binds ubiquitinated proteins and membrane cargo molecules with a cytosolic acidic cluster-dileucine (DXXLL) motif. Mediates export of the GPCR receptor ADRA2B to the cell surface. Involved in BACE1 transport and sorting as well as regulation of BACE1 protein levels. Regulates retrograde transport of BACE1 from endosomes to the trans-Golgi network via interaction through the VHS motif and dependent of BACE1 phosphorylation. Modulates BACE1 protein levels independently of the interaction between VHS domain and DXXLL motif through recognition of ubiquitination. Key player in a novel DXXLL-mediated endosomal sorting machinery to the recycling pathway that targets NTRK1 to the plasma membrane. This is ADP-ribosylation factor-binding protein GGA3 (Gga3) from Mus musculus (Mouse).